The sequence spans 89 residues: Large ribosomal subunit protein bL27 (89 aa).

A disordered region spans residues 1–22 (MAHKKGTGSTRNGRDSNAQRLG). The segment covering 7-19 (TGSTRNGRDSNAQ) has biased composition (polar residues).

Belongs to the bacterial ribosomal protein bL27 family.

The chain is Large ribosomal subunit protein bL27 from Cyanothece sp. (strain PCC 7425 / ATCC 29141).